A 498-amino-acid chain; its full sequence is Polyamine aminopropyltransferase (498 aa).

Transmembrane regions (helical) follow at residues 7–27, 35–55, 67–87, 97–117, 134–154, and 163–183; these read ISVL…GTIA, VTQF…GSWL, FLEI…ILYL, IPLF…IPVL, VLSL…IFFA, and GFIF…VLPL. The tract at residues 196 to 446 is spermidine synthase; it reads VVVLTLLILG…AGQRPIQFKK (251 aa). In terms of domain architecture, PABS spans 200-439; sequence TLLILGFSYS…GEWGFVLAGQ (240 aa). Gln-234 is an S-methyl-5'-thioadenosine binding site. Spermidine-binding residues include His-264 and Asp-288. Residues Asp-308 and 342 to 343 contribute to the S-methyl-5'-thioadenosine site; that span reads DA. Asp-360 (proton acceptor) is an active-site residue.

The protein belongs to the spermidine/spermine synthase family. Homodimer or homotetramer.

Its subcellular location is the cell membrane. It catalyses the reaction S-adenosyl 3-(methylsulfanyl)propylamine + putrescine = S-methyl-5'-thioadenosine + spermidine + H(+). It participates in amine and polyamine biosynthesis; spermidine biosynthesis; spermidine from putrescine: step 1/1. Its function is as follows. Catalyzes the irreversible transfer of a propylamine group from the amino donor S-adenosylmethioninamine (decarboxy-AdoMet) to putrescine (1,4-diaminobutane) to yield spermidine. This chain is Polyamine aminopropyltransferase, found in Leptospira interrogans serogroup Icterohaemorrhagiae serovar copenhageni (strain Fiocruz L1-130).